A 274-amino-acid chain; its full sequence is Large ribosomal subunit protein uL2 (274 aa).

The segment at 223–258 (VAMNPVDHPHGGGEGRTSGGRHPVTPWGIPTKGYKT) is disordered.

The protein belongs to the universal ribosomal protein uL2 family. Part of the 50S ribosomal subunit. Forms a bridge to the 30S subunit in the 70S ribosome.

One of the primary rRNA binding proteins. Required for association of the 30S and 50S subunits to form the 70S ribosome, for tRNA binding and peptide bond formation. It has been suggested to have peptidyltransferase activity; this is somewhat controversial. Makes several contacts with the 16S rRNA in the 70S ribosome. The polypeptide is Large ribosomal subunit protein uL2 (Geotalea daltonii (strain DSM 22248 / JCM 15807 / FRC-32) (Geobacter daltonii)).